Consider the following 122-residue polypeptide: Cysteine proteinase inhibitor 5 (122 aa).

Residues 1-26 form the signal peptide; that stretch reads MTSKVVFLLLLSLVVVLLPLYASAAA. Residues 29–117 enclose the Cystatin domain; that stretch reads GGWSPISNVT…RNLTSFEPAN (89 aa). Asparagine 36 carries N-linked (GlcNAc...) asparagine glycosylation. The Secondary area of contact signature appears at 72-76; the sequence is QVVSG. Asparagine 109 is a glycosylation site (N-linked (GlcNAc...) asparagine).

Belongs to the cystatin family. Phytocystatin subfamily.

The protein localises to the secreted. Specific inhibitor of cysteine proteinases. Probably involved in the regulation of endogenous processes and in defense against pests and pathogens. This chain is Cysteine proteinase inhibitor 5 (CYS5), found in Arabidopsis thaliana (Mouse-ear cress).